The following is a 170-amino-acid chain: NADH-quinone oxidoreductase subunit B (170 aa).

Residues cysteine 42, cysteine 43, cysteine 107, and cysteine 136 each contribute to the [4Fe-4S] cluster site.

The protein belongs to the complex I 20 kDa subunit family. As to quaternary structure, NDH-1 is composed of 14 different subunits. Subunits NuoB, C, D, E, F, and G constitute the peripheral sector of the complex. [4Fe-4S] cluster is required as a cofactor.

It localises to the cell inner membrane. It carries out the reaction a quinone + NADH + 5 H(+)(in) = a quinol + NAD(+) + 4 H(+)(out). In terms of biological role, NDH-1 shuttles electrons from NADH, via FMN and iron-sulfur (Fe-S) centers, to quinones in the respiratory chain. The immediate electron acceptor for the enzyme in this species is believed to be ubiquinone. Couples the redox reaction to proton translocation (for every two electrons transferred, four hydrogen ions are translocated across the cytoplasmic membrane), and thus conserves the redox energy in a proton gradient. This Campylobacter concisus (strain 13826) protein is NADH-quinone oxidoreductase subunit B.